A 257-amino-acid polypeptide reads, in one-letter code: Thioesterase frbE (257 aa).

The protein belongs to the AMT4 thioesterase family.

It functions in the pathway antifungal biosynthesis. Its function is as follows. Thioesterase; part of the gene cluster that mediates the biosynthesis of the antifungal antibiotic FR901469, an inhibitor of beta-1,3-glucansynthase, exerting antifungal activity against the pathogenes Candida albicans and Aspergillus fumigatus. FR901469 is a cyclic depsipeptide containing 12 amino acid residues and a fatty acid chain. The NRPS frbI contains 12 modules responsible for the formation of the depsipeptide backbone which is denoted as Acyl-Thr-Ala-Tyr-Val-4OHPro-Thr-Thr-3OHPro-threo3OHGln-Gly-Thr-Orn-OH (C71H116N14O23). The PKS frbB is probably involved in the production of the hydrocarbon chain, and the acyl-CoA ligase frbC might be involved in the transport of the chain to the peptide ptoduct of frbI. Because FR901469 contains 3 hydroxylated amino acid residues, the 3 oxygenases frbA, frbH, and frbJ might be participating in amino acid hydroxylation. As no thioesterase domains were detected in frbI or frbB, the thioesterases frbD and frbE may instead release and cyclize the products of the NRPS and PKS, respectively. The sequence is that of Thioesterase frbE from Dothideomycetidae sp. (strain 11243) (Fungal sp. (strain No.11243)).